The following is a 74-amino-acid chain: Kappa-scoloptoxin(07)-Ssm2f (74 aa).

Positions 1–19 are cleaved as a signal peptide; the sequence is MLVFYAILFVTVFSNTVMG. Positions 20–41 are excised as a propeptide; sequence ATIDKPIPKPIFREAIEEMEVN.

This sequence belongs to the scoloptoxin-07 family. Contains 3 disulfide bonds. In terms of tissue distribution, expressed by the venom gland.

The protein resides in the secreted. Inhibits voltage-gated potassium channels. This is Kappa-scoloptoxin(07)-Ssm2f from Scolopendra mutilans (Chinese red-headed centipede).